The following is a 36-amino-acid chain: Kappa-actitoxin-Avd6a (36 aa).

In terms of domain architecture, ShKT spans 2-36 (CKDNFAAATCKHVKENKNCGSQKYATNCAKTCGKC). Cystine bridges form between C2-C36, C11-C29, and C20-C33. The interval 24–25 (KY) is crucial for binding to potassium channels.

The protein belongs to the sea anemone type 1 potassium channel toxin family. Type 1b subfamily.

It is found in the secreted. Its subcellular location is the nematocyst. Its function is as follows. Blocks voltage-gated potassium channels Kv1.2/KCNA2 (IC(50)=140 nM). The polypeptide is Kappa-actitoxin-Avd6a (Anemonia sulcata (Mediterranean snakelocks sea anemone)).